The primary structure comprises 640 residues: Protein ALTERED PHOSPHATE STARVATION RESPONSE 1 (640 aa).

The interval 60–175 is disordered; sequence TPLHLHHNPP…ATPQASSVVS (116 aa). Over residues 68-87 the composition is skewed to pro residues; the sequence is PPSPSPPPPPPPRPPPPPLS. A compositionally biased stretch (low complexity) spans 88 to 103; the sequence is PGSETTTWTTTTTSSV. The span at 104-118 shows a compositional bias: pro residues; the sequence is LPPPPPPPPPPPPPS. Over residues 144 to 173 the composition is skewed to low complexity; it reads TTATRTATGTGSDAAVTTAPTTATPQASSV. Residues 336–371 adopt a coiled-coil conformation; it reads KTEKAKKDVEKLESQLSVSSQAIQSASNEIIKLRET.

In terms of tissue distribution, expressed in the root tip of primary and lateral roots, specifically in the meristematic region, including the quiescent center and lateral root cap cells.

Its subcellular location is the nucleus. Its function is as follows. Required for the coordination of cell differentiation and cell elongation in the root tip. Required for the coordination of cell processes necessary for correct root growth in response to phosphate starvation, through the modulation of the auxin transporter protein PIN7. In Arabidopsis thaliana (Mouse-ear cress), this protein is Protein ALTERED PHOSPHATE STARVATION RESPONSE 1.